The sequence spans 66 residues: Large ribosomal subunit protein eL24 (66 aa).

Residues C6, C9, C32, and C36 each coordinate Zn(2+). Residues 6-36 form a C4-type zinc finger; that stretch reads CSFCGKTIEPGTGIMYVRKDGAILYFCSNKC.

It belongs to the eukaryotic ribosomal protein eL24 family. As to quaternary structure, part of the 50S ribosomal subunit. Forms a cluster with proteins L3 and L14. Zn(2+) is required as a cofactor.

In terms of biological role, binds to the 23S rRNA. This chain is Large ribosomal subunit protein eL24, found in Thermoplasma volcanium (strain ATCC 51530 / DSM 4299 / JCM 9571 / NBRC 15438 / GSS1).